The sequence spans 175 residues: MSTTNHDHHIYVLMGVSGSGKSAVASEVAHQLHAAFLDGDFLHPRRNIEKMASGEPLNDDDRKPWLQALNDAAFAMQRTNKVSLIVCSALKKHYRDLLREGNPNLSFIYLKGDFDVIESRLKARKGHFFKTQMLVTQFETLQEPGADETDVLVVDIDQPLEGVVASTIEVIKKGK.

15 to 22 (GVSGSGKS) is a binding site for ATP.

This sequence belongs to the gluconokinase GntK/GntV family.

The catalysed reaction is D-gluconate + ATP = 6-phospho-D-gluconate + ADP + H(+). It functions in the pathway carbohydrate acid metabolism; D-gluconate degradation. The sequence is that of Thermoresistant gluconokinase (gntK) from Escherichia coli (strain K12).